Consider the following 724-residue polypeptide: Phenylalanine ammonia-lyase (724 aa).

Residue Y99 is the Proton donor/acceptor of the active site. Positions 204 to 206 form a cross-link, 5-imidazolinone (Ala-Gly); sequence ASG. S205 carries the post-translational modification 2,3-didehydroalanine (Ser). (E)-cinnamate-binding residues include N265, Q355, R361, N391, K462, E490, and N493.

The protein belongs to the PAL/histidase family. Homotetramer. In terms of processing, contains an active site 4-methylidene-imidazol-5-one (MIO), which is formed autocatalytically by cyclization and dehydration of residues Ala-Ser-Gly.

The protein localises to the cytoplasm. It carries out the reaction L-phenylalanine = (E)-cinnamate + NH4(+). It participates in phenylpropanoid metabolism; trans-cinnamate biosynthesis; trans-cinnamate from L-phenylalanine: step 1/1. Catalyzes the non-oxidative deamination of L-phenylalanine to form trans-cinnamic acid and a free ammonium ion. Facilitates the commitment step in phenylpropanoid pathways that produce secondary metabolites such as lignins, coumarins and flavonoids. This Flammulina velutipes (Agaricus velutipes) protein is Phenylalanine ammonia-lyase.